The chain runs to 590 residues: Glutamine--tRNA ligase (590 aa).

Positions 55 to 65 (PEPNGYLHIGH) match the 'HIGH' region motif. ATP-binding positions include 56–58 (EPN) and 62–68 (HIGHAKS). L-glutamine-binding residues include aspartate 93 and tyrosine 238. ATP is bound by residues threonine 257 and 292–293 (RL). The short motif at 299-303 (ITSKR) is the 'KMSKS' region element.

This sequence belongs to the class-I aminoacyl-tRNA synthetase family. As to quaternary structure, monomer.

The protein localises to the cytoplasm. The catalysed reaction is tRNA(Gln) + L-glutamine + ATP = L-glutaminyl-tRNA(Gln) + AMP + diphosphate. The polypeptide is Glutamine--tRNA ligase (Polynucleobacter asymbioticus (strain DSM 18221 / CIP 109841 / QLW-P1DMWA-1) (Polynucleobacter necessarius subsp. asymbioticus)).